A 138-amino-acid polypeptide reads, in one-letter code: Probable phospholipase A2 homolog 1 (138 aa).

Positions Met-1–Ala-21 are cleaved as a signal peptide. Cystine bridges form between Cys-29-Cys-56, Cys-33-Cys-62, Cys-38-Cys-109, Cys-49-Cys-69, Cys-68-Cys-93, and Cys-75-Cys-86. Ca(2+)-binding residues include Tyr-48, Gly-50, and Trp-53. His-72 is a catalytic residue. Asp-73 is a binding site for Ca(2+).

This sequence belongs to the phospholipase A2 family. It depends on Ca(2+) as a cofactor.

Its subcellular location is the secreted. The enzyme catalyses a 1,2-diacyl-sn-glycero-3-phosphocholine + H2O = a 1-acyl-sn-glycero-3-phosphocholine + a fatty acid + H(+). Functionally, PA2 catalyzes the calcium-dependent hydrolysis of the 2-acyl groups in 3-sn-phosphoglycerides. Releases lysophospholipids (LPLs) and free fatty acids (FFAs) from membrane phospholipids in response to hormones and other external stimuli. This chain is Probable phospholipase A2 homolog 1 (PLA2-I), found in Oryza sativa subsp. japonica (Rice).